Consider the following 229-residue polypeptide: Cytidylate kinase (229 aa).

7-15 lines the ATP pocket; that stretch reads GPAGAGKSS.

Belongs to the cytidylate kinase family. Type 1 subfamily.

The protein resides in the cytoplasm. It catalyses the reaction CMP + ATP = CDP + ADP. It carries out the reaction dCMP + ATP = dCDP + ADP. In Rhodopirellula baltica (strain DSM 10527 / NCIMB 13988 / SH1), this protein is Cytidylate kinase.